The sequence spans 428 residues: Peptidase B (428 aa).

Mn(2+) contacts are provided by Lys195 and Asp200. Residue Lys207 is part of the active site. Asp218, Asp277, and Glu279 together coordinate Mn(2+). Arg281 is a catalytic residue.

It belongs to the peptidase M17 family. In terms of assembly, homohexamer. Mn(2+) is required as a cofactor.

The protein localises to the cytoplasm. The enzyme catalyses Release of an N-terminal amino acid, Xaa, from a peptide or arylamide. Xaa is preferably Glu or Asp but may be other amino acids, including Leu, Met, His, Cys and Gln.. Functionally, probably plays an important role in intracellular peptide degradation. The sequence is that of Peptidase B from Cronobacter sakazakii (strain ATCC BAA-894) (Enterobacter sakazakii).